The chain runs to 140 residues: Small ribosomal subunit protein uS12 (140 aa).

Residue Asp103 is modified to 3-methylthioaspartic acid. The interval 120–140 (GVQKRMQARSKYGAKRPKKGK) is disordered. Basic residues predominate over residues 125–140 (MQARSKYGAKRPKKGK).

It belongs to the universal ribosomal protein uS12 family. As to quaternary structure, part of the 30S ribosomal subunit. Contacts proteins S8 and S17. May interact with IF1 in the 30S initiation complex.

In terms of biological role, with S4 and S5 plays an important role in translational accuracy. Functionally, interacts with and stabilizes bases of the 16S rRNA that are involved in tRNA selection in the A site and with the mRNA backbone. Located at the interface of the 30S and 50S subunits, it traverses the body of the 30S subunit contacting proteins on the other side and probably holding the rRNA structure together. The combined cluster of proteins S8, S12 and S17 appears to hold together the shoulder and platform of the 30S subunit. The sequence is that of Small ribosomal subunit protein uS12 from Desulfitobacterium hafniense (strain Y51).